The sequence spans 216 residues: Somatotropin (216 aa).

Positions 1 to 25 (MAPGSWFSPLLIAVVTLGLPQGAAA) are cleaved as a signal peptide. His45 is a Zn(2+) binding site. Cys78 and Cys189 form a disulfide bridge. Position 198 (Glu198) interacts with Zn(2+). A disulfide bridge connects residues Cys206 and Cys214.

The protein belongs to the somatotropin/prolactin family. Pituitary gland.

The protein localises to the secreted. In terms of biological role, growth hormone plays an important role in growth control. This chain is Somatotropin (GH), found in Meleagris gallopavo (Wild turkey).